The chain runs to 205 residues: MSEHFEKRRPVFLQLGFNEAALPQLKAYLDLLWSSNEELNLISRKMTYEELIDNHVIDCLLPIKDFPKDVKVAADFGSGGGLPGVIYAIQFPNVEYHLFEKSKLKQDFLNRCVSIAPNLRIHGEIPPKLEKIEVVTSRAFKPVDVILEFSRDYYKKGGKYFLLKGRKEKIDEEVALARKKFKDLKVTVQPLSSPVLEVERHLVLI.

Residues glycine 77, leucine 82, 100 to 102 (EKS), 129 to 130 (LE), and arginine 138 contribute to the S-adenosyl-L-methionine site.

It belongs to the methyltransferase superfamily. RNA methyltransferase RsmG family.

It localises to the cytoplasm. It catalyses the reaction guanosine(527) in 16S rRNA + S-adenosyl-L-methionine = N(7)-methylguanosine(527) in 16S rRNA + S-adenosyl-L-homocysteine. Its function is as follows. Specifically methylates the N7 position of guanine in position 527 of 16S rRNA. The protein is Ribosomal RNA small subunit methyltransferase G 1 of Bdellovibrio bacteriovorus (strain ATCC 15356 / DSM 50701 / NCIMB 9529 / HD100).